The following is a 374-amino-acid chain: Chaperone protein DnaJ (374 aa).

In terms of domain architecture, J spans 5 to 71; it reads DLYAILGVCR…QKRASYDRFG (67 aa). A CR-type zinc finger spans residues 132–210; that stretch reads GVEKQIRIAT…CQGTGRVKDT (79 aa). Positions 145, 148, 162, 165, 184, 187, 198, and 201 each coordinate Zn(2+). CXXCXGXG motif repeat units follow at residues 145 to 152, 162 to 169, 184 to 191, and 198 to 205; these read CGECHGSG, CPTCNGAG, CPTCHGRG, and CNKCQGTG.

Belongs to the DnaJ family. In terms of assembly, homodimer. The cofactor is Zn(2+).

It localises to the cytoplasm. Functionally, participates actively in the response to hyperosmotic and heat shock by preventing the aggregation of stress-denatured proteins and by disaggregating proteins, also in an autonomous, DnaK-independent fashion. Unfolded proteins bind initially to DnaJ; upon interaction with the DnaJ-bound protein, DnaK hydrolyzes its bound ATP, resulting in the formation of a stable complex. GrpE releases ADP from DnaK; ATP binding to DnaK triggers the release of the substrate protein, thus completing the reaction cycle. Several rounds of ATP-dependent interactions between DnaJ, DnaK and GrpE are required for fully efficient folding. Also involved, together with DnaK and GrpE, in the DNA replication of plasmids through activation of initiation proteins. This is Chaperone protein DnaJ from Dichelobacter nodosus (strain VCS1703A).